A 449-amino-acid chain; its full sequence is MLSSQTSSIFTVSRLNQTVRLLLEQEMGQVWISGEISNFTQPASGHWYFTLKDDTAQVRCAMFRNSNRRVTFRPQHGQQVLVRANITLYEPRGDYQIIAESMQPAGEGLLQQKYEQLKAKLHSEGLFDQQHKQPLPSPAHCVGVITSKTGAALHDILHVLKRRDPSLPVIIYPTAVQGDDAPGQIVRAIELANARGECDVLIVGRGGGSLEDLWSFNDERVARAIFASRIPVVSAVGHETDVTIADFVADLRAPTPSAAAEIVSRNQQELLRRIQSAQQRLGMAMDYYLANRSRRFTQIFHRLQQQHPQLRLARQQTALERLRQRMGFALEARIKQATQRQQRVSQRLSQQNPQPRIHRAQSRIQQLEYRLTENIRSRLSEQRERFGNAVTHLEAVSPLATLARGYTVSTTTNGKVLKKIKQVKAGDIMTTRLEDGWLESEVKSVTPGT.

This sequence belongs to the XseA family. As to quaternary structure, heterooligomer composed of large and small subunits.

The protein localises to the cytoplasm. It carries out the reaction Exonucleolytic cleavage in either 5'- to 3'- or 3'- to 5'-direction to yield nucleoside 5'-phosphates.. Functionally, bidirectionally degrades single-stranded DNA into large acid-insoluble oligonucleotides, which are then degraded further into small acid-soluble oligonucleotides. The chain is Exodeoxyribonuclease 7 large subunit from Salmonella agona (strain SL483).